The primary structure comprises 417 residues: Mast cell carboxypeptidase A (417 aa).

The first 15 residues, 1-15 (MRFFLLMAVIYTTLA), serve as a signal peptide directing secretion. The propeptide at 16 to 109 (IAPVHFDREK…IEKQFDVKDE (94 aa)) is activation peptide. Residues 118-412 (KYNDWDKIVS…LSVKFIAKYI (295 aa)) enclose the Peptidase M14 domain. 2 disulfides stabilise this stretch: cysteine 173-cysteine 186 and cysteine 245-cysteine 268. Histidine 176 and glutamate 179 together coordinate Zn(2+). Histidine 304 lines the Zn(2+) pocket. Catalysis depends on glutamate 378, which acts as the Proton donor/acceptor.

Belongs to the peptidase M14 family. It depends on Zn(2+) as a cofactor.

The protein resides in the cytoplasmic vesicle. The protein localises to the secretory vesicle. The enzyme catalyses Release of a C-terminal amino acid, but little or no action with -Asp, -Glu, -Arg, -Lys or -Pro.. The protein is Mast cell carboxypeptidase A (Cpa3) of Mus musculus (Mouse).